A 215-amino-acid chain; its full sequence is Cytokinin riboside 5'-monophosphate phosphoribohydrolase LOG3 (215 aa).

Substrate-binding positions include Glu-84, 102 to 103 (RK), 119 to 125 (GYGTLEE), and Thr-131.

It belongs to the LOG family. Expressed in roots and shoots. Detected in root procambium, lateral root primordia, vascular tissues of immature leaves, axillary buds, style and ovular funiculus.

It is found in the cytoplasm. The protein localises to the nucleus. It catalyses the reaction N(6)-(dimethylallyl)adenosine 5'-phosphate + H2O = N(6)-dimethylallyladenine + D-ribose 5-phosphate. The enzyme catalyses 9-ribosyl-trans-zeatin 5'-phosphate + H2O = trans-zeatin + D-ribose 5-phosphate. In terms of biological role, cytokinin-activating enzyme working in the direct activation pathway. Phosphoribohydrolase that converts inactive cytokinin nucleotides to the biologically active free-base forms. The chain is Cytokinin riboside 5'-monophosphate phosphoribohydrolase LOG3 (LOG3) from Arabidopsis thaliana (Mouse-ear cress).